The primary structure comprises 646 residues: MNTLLSIGRSIITSAPRIVSARQTTVTARTMATVSTINMPRDPNTLSNYNNWRTKHTIADLAIDFTKQRVHGTVTLQLESITDKESEEIILDTSFVDVQSVAVDGNKTGEWTLEKRIEPFGTPLSVKIPGGAAKGTVIALAITLSTTDKCTALQWLTPAQTSNKKFPYMFSQCQAIHNRSIFPCQDTPDVKSTYDFRIRSPLPVLASGLPRGAGSFVHGENGESGTLLYSFYQEIPMPSYLFALASGDIATASIGPRSLVSTGPEELIGAKWELERDTEKFIETIEKIVYPYEWTQYNVLVLPPSFPYGGMENPVFTFATPTIISGDRENVDVVAHELAHSWSGNLVSNASWEHFWLNEGWTVYLERRIIAAVHGEAYRDFSSIIGWKALEDSVKLYGEDHEFTKLIVDLKGKDPDDAFSSVPYEKGFHFLYYLERLVGKPSWDKFIPHYFTTWKKKSLDSYDFKATLLDFFASDSAASKALESVDWDSWFYKPGLPSKPEFDTSLVDKCYALAKKWESKDYTPSPSDIEGWAANQVVVFLQQVQLFTTPLTPVQSQAMGKAYNLVNTKNVELSSRYFGVGLAAKDETVYQPTAELLGKVGRMKFVRTLYRKLVVVDRKLAVETFEKNKDFYHPICRDQVEKDLKE.

A peptide is bound by residues 172–174 and 307–312; these read QCQ and PYGGME. A Zn(2+)-binding site is contributed by His-336. Glu-337 serves as the catalytic Proton acceptor. 2 residues coordinate Zn(2+): His-340 and Glu-359. The Proton donor role is filled by Tyr-424.

Belongs to the peptidase M1 family. Zn(2+) is required as a cofactor.

It is found in the cytoplasm. The protein localises to the nucleus. It catalyses the reaction leukotriene A4 + H2O = leukotriene B4. The protein operates within lipid metabolism; leukotriene B4 biosynthesis. Aminopeptidase that preferentially cleaves tripeptides. Also has low epoxide hydrolase activity (in vitro). Can hydrolyze an epoxide moiety of LTA(4) to form LTB(4) (in vitro). The sequence is that of Leukotriene A-4 hydrolase homolog from Botryotinia fuckeliana (strain B05.10) (Noble rot fungus).